The chain runs to 210 residues: Putative biopolymer transport protein ExbB-like 3 (210 aa).

3 consecutive transmembrane segments (helical) span residues 2–22 (AGGI…ALII), 104–124 (LFQT…ILGL), and 152–172 (LVST…ANVF).

It belongs to the ExbB/TolQ family.

Its subcellular location is the cell inner membrane. Its function is as follows. Involved in the TonB-dependent energy-dependent transport of various receptor-bound substrates. Protects ExbD from proteolytic degradation and functionally stabilizes TonB. The sequence is that of Putative biopolymer transport protein ExbB-like 3 from Synechocystis sp. (strain ATCC 27184 / PCC 6803 / Kazusa).